Consider the following 530-residue polypeptide: Probable serine/threonine-protein kinase fnkB (530 aa).

The Protein kinase domain occupies 11-268 (WEIVETLKSN…SITLIDHPFL (258 aa)). Residues 17 to 25 (LKSNVFKVN) and Lys-43 each bind ATP. The Proton acceptor role is filled by Asp-131.

It belongs to the protein kinase superfamily. STE Ser/Thr protein kinase family. It depends on Mg(2+) as a cofactor.

It carries out the reaction L-seryl-[protein] + ATP = O-phospho-L-seryl-[protein] + ADP + H(+). It catalyses the reaction L-threonyl-[protein] + ATP = O-phospho-L-threonyl-[protein] + ADP + H(+). The protein is Probable serine/threonine-protein kinase fnkB of Dictyostelium discoideum (Social amoeba).